The following is a 782-amino-acid chain: Protein phosphatase 1 regulatory subunit 12C (782 aa).

Low complexity-rich tracts occupy residues 1 to 19 and 77 to 88; these read MSGE…AAAA and DPGPGSGAASDP. Disordered regions lie at residues 1–45 and 77–98; these read MSGE…GERR and DPGP…RAVL. Ser2 is subject to N-acetylserine. 4 ANK repeats span residues 104–133, 137–166, 230–259, and 263–292; these read DGIS…TVNQ, EGWT…NIAA, TGAS…DTEL, and DGWT…GMDS. A coiled-coil region spans residues 301–332; sequence CDLADEDVMNLLEELAQKQEDLRNQKEGSQGR. Positions 321–685 are disordered; that stretch reads DLRNQKEGSQ…HEEPDGGFRK (365 aa). Polar residues predominate over residues 332–341; that stretch reads RGQESQVPSS. The segment covering 353–369 has biased composition (basic and acidic residues); sequence SSREKISLQDLSKERRP. The span at 401-413 shows a compositional bias: low complexity; it reads VSSPVSSNPKSPV. 5 positions are modified to phosphoserine: Ser403, Ser411, Ser431, Ser454, and Ser509. Residues 451–465 are compositionally biased toward polar residues; it reads RSASSSLLEKASTQA. Residues 537 to 546 show a composition bias toward basic and acidic residues; that stretch reads VRDEESESQR. The segment covering 547–557 has biased composition (basic residues); it reads KARSRLMRQSR. Thr560 bears the Phosphothreonine mark. Ser647 is modified (phosphoserine). Residues 664–685 show a composition bias toward basic and acidic residues; that stretch reads SQRDLVLESKQEHEEPDGGFRK. A coiled-coil region spans residues 681-782; that stretch reads GGFRKMYTEL…LIRVISKLSK (102 aa).

PP1 comprises a catalytic subunit, PPP1CA, PPP1CB or PPP1CC, and one or several targeting or regulatory subunits. PPP1R12C mediates binding to myosin. Interacts via its N-terminus with PPP1CB. Interacts with IL16. Interacts with the coiled-coil domain of MPRIP. Interacts with NOD2. Post-translationally, phosphorylation at Thr-560 is essential for its interaction with PPP1CB.

The protein resides in the cytoplasm. It is found in the cytoskeleton. Its subcellular location is the stress fiber. Regulates myosin phosphatase activity. In Mus musculus (Mouse), this protein is Protein phosphatase 1 regulatory subunit 12C.